A 376-amino-acid chain; its full sequence is Beta-centractin (376 aa).

N-acetylmethionine is present on M1. A 3'-nitrotyrosine modification is found at Y4.

The protein belongs to the actin family. ARP1 subfamily.

It localises to the cytoplasm. Its subcellular location is the cytoskeleton. The protein resides in the microtubule organizing center. The protein localises to the centrosome. Functionally, component of a multi-subunit complex involved in microtubule based vesicle motility. It is associated with the centrosome. This is Beta-centractin (Actr1b) from Mus musculus (Mouse).